A 106-amino-acid chain; its full sequence is MPFLDIQKKLGISLDRHFMFLSAEQPYKNAARCHAFEKEWIECAHGIGGTRAKKECKIEFDDFEECLLRYKTMRRMHDIKKQREKLMKEGKYTPPPHHSGREEPRP.

In terms of domain architecture, CHCH spans 30-74 (AARCHAFEKEWIECAHGIGGTRAKKECKIEFDDFEECLLRYKTMR). Short sequence motifs (cx9C motif) lie at residues 33 to 43 (CHAFEKEWIEC) and 56 to 66 (CKIEFDDFEEC). Cystine bridges form between cysteine 33–cysteine 66 and cysteine 43–cysteine 56. Residues 79 to 91 (IKKQREKLMKEGK) show a composition bias toward basic and acidic residues. A disordered region spans residues 79–106 (IKKQREKLMKEGKYTPPPHHSGREEPRP).

Belongs to the complex I NDUFS5 subunit family. Mammalian complex I is composed of 45 different subunits. This is a component of the iron-sulfur (IP) fragment of the enzyme.

It localises to the mitochondrion inner membrane. It is found in the mitochondrion intermembrane space. In terms of biological role, accessory subunit of the mitochondrial membrane respiratory chain NADH dehydrogenase (Complex I), that is believed not to be involved in catalysis. Complex I functions in the transfer of electrons from NADH to the respiratory chain. The immediate electron acceptor for the enzyme is believed to be ubiquinone. This Mus musculus (Mouse) protein is NADH dehydrogenase [ubiquinone] iron-sulfur protein 5 (Ndufs5).